We begin with the raw amino-acid sequence, 217 residues long: MGQKVCAHGFRVGPTLIKGWDSVLYAEKHYKTLFIQDLKIRDLINKGFNQAQVSRVLIERPSNKSIIININAKKPNIIIGRNGSEIDKIKKAIEKMTSLKEVYINIHEVRKFNIDAAIVAQTIALQLEKRVSFRKAMKTAIQASFKQGGQGIRVSCSGRLGGAEIARTEWYIEGRMPLHTLRADIDYSTAEAITTYGIIGVKVWIYKGEYTENKRYN.

The KH type-2 domain maps to 40 to 110; the sequence is IRDLINKGFN…EVYINIHEVR (71 aa).

Belongs to the universal ribosomal protein uS3 family. Part of the 30S ribosomal subunit. Forms a tight complex with proteins S10 and S14.

Its function is as follows. Binds the lower part of the 30S subunit head. Binds mRNA in the 70S ribosome, positioning it for translation. This chain is Small ribosomal subunit protein uS3, found in Rickettsia felis (strain ATCC VR-1525 / URRWXCal2) (Rickettsia azadi).